A 361-amino-acid polypeptide reads, in one-letter code: D-alanine--D-alanine ligase (361 aa).

Residues Lys-140–Ala-345 form the ATP-grasp domain. Glu-173–Glu-228 is an ATP binding site. Mg(2+) contacts are provided by Asp-299, Glu-312, and Asn-314.

This sequence belongs to the D-alanine--D-alanine ligase family. Mg(2+) is required as a cofactor. It depends on Mn(2+) as a cofactor.

Its subcellular location is the cytoplasm. It carries out the reaction 2 D-alanine + ATP = D-alanyl-D-alanine + ADP + phosphate + H(+). Its pathway is cell wall biogenesis; peptidoglycan biosynthesis. Functionally, cell wall formation. This is D-alanine--D-alanine ligase from Bacillus licheniformis (strain ATCC 14580 / DSM 13 / JCM 2505 / CCUG 7422 / NBRC 12200 / NCIMB 9375 / NCTC 10341 / NRRL NRS-1264 / Gibson 46).